The chain runs to 120 residues: Ribosome-binding factor A (120 aa).

This sequence belongs to the RbfA family. As to quaternary structure, monomer. Binds 30S ribosomal subunits, but not 50S ribosomal subunits or 70S ribosomes.

It is found in the cytoplasm. In terms of biological role, one of several proteins that assist in the late maturation steps of the functional core of the 30S ribosomal subunit. Associates with free 30S ribosomal subunits (but not with 30S subunits that are part of 70S ribosomes or polysomes). Required for efficient processing of 16S rRNA. May interact with the 5'-terminal helix region of 16S rRNA. The chain is Ribosome-binding factor A from Lactobacillus delbrueckii subsp. bulgaricus (strain ATCC 11842 / DSM 20081 / BCRC 10696 / JCM 1002 / NBRC 13953 / NCIMB 11778 / NCTC 12712 / WDCM 00102 / Lb 14).